Reading from the N-terminus, the 134-residue chain is MAAYTSKIFALFALIALSASATTAITTMQYFPPTLAMGTMDPCRQYMMQTLGMGSSTAMFMSQPMALLQQQCCMQLQGMMPQCHCGTSCQMMQSMQQVICAGLGQQQMMKMAMQMPYMCNMAPVNFQLSSCGCC.

The first 24 residues, 1–24 (MAAYTSKIFALFALIALSASATTA), serve as a signal peptide directing secretion. Residues 69-76 (QQQCCMQL) form an octapeptide unique to cereal prolamins region.

The protein belongs to the prolamin family.

It localises to the vacuole. It is found in the aleurone grain. In terms of biological role, seed storage protein; serves as a source of nitrogen, carbon and sulfur for the young developing seedling. The chain is 10 kDa prolamin from Oryza sativa subsp. indica (Rice).